The sequence spans 602 residues: Elongation factor 4 (602 aa).

One can recognise a tr-type G domain in the interval 2–184 (NHIRNFSIIA…QIVAKVPAPR (183 aa)). GTP-binding positions include 14–19 (DHGKST) and 131–134 (NKMD).

This sequence belongs to the TRAFAC class translation factor GTPase superfamily. Classic translation factor GTPase family. LepA subfamily.

The protein localises to the cell inner membrane. The catalysed reaction is GTP + H2O = GDP + phosphate + H(+). Required for accurate and efficient protein synthesis under certain stress conditions. May act as a fidelity factor of the translation reaction, by catalyzing a one-codon backward translocation of tRNAs on improperly translocated ribosomes. Back-translocation proceeds from a post-translocation (POST) complex to a pre-translocation (PRE) complex, thus giving elongation factor G a second chance to translocate the tRNAs correctly. Binds to ribosomes in a GTP-dependent manner. The polypeptide is Elongation factor 4 (Acidovorax ebreus (strain TPSY) (Diaphorobacter sp. (strain TPSY))).